Reading from the N-terminus, the 277-residue chain is Putative phosphoenolpyruvate synthase regulatory protein (277 aa).

Residue 157–164 (GVSRSGKT) coordinates ADP.

The protein belongs to the pyruvate, phosphate/water dikinase regulatory protein family. PSRP subfamily.

It carries out the reaction [pyruvate, water dikinase] + ADP = [pyruvate, water dikinase]-phosphate + AMP + H(+). It catalyses the reaction [pyruvate, water dikinase]-phosphate + phosphate + H(+) = [pyruvate, water dikinase] + diphosphate. In terms of biological role, bifunctional serine/threonine kinase and phosphorylase involved in the regulation of the phosphoenolpyruvate synthase (PEPS) by catalyzing its phosphorylation/dephosphorylation. The chain is Putative phosphoenolpyruvate synthase regulatory protein from Azoarcus sp. (strain BH72).